The following is a 439-amino-acid chain: tRNA(Ile)-lysidine synthase (439 aa).

23–28 (SGGLDS) provides a ligand contact to ATP.

This sequence belongs to the tRNA(Ile)-lysidine synthase family.

The protein resides in the cytoplasm. It carries out the reaction cytidine(34) in tRNA(Ile2) + L-lysine + ATP = lysidine(34) in tRNA(Ile2) + AMP + diphosphate + H(+). Functionally, ligates lysine onto the cytidine present at position 34 of the AUA codon-specific tRNA(Ile) that contains the anticodon CAU, in an ATP-dependent manner. Cytidine is converted to lysidine, thus changing the amino acid specificity of the tRNA from methionine to isoleucine. This chain is tRNA(Ile)-lysidine synthase, found in Methylococcus capsulatus (strain ATCC 33009 / NCIMB 11132 / Bath).